Consider the following 442-residue polypeptide: Endothelin receptor type B (442 aa).

The signal sequence occupies residues 1-26 (MQPPPSLCGRALVALVLACGLSRIWG). Over 27-101 (EERGFPPDRA…GPIEIKETFK (75 aa)) the chain is Extracellular. A glycan (N-linked (GlcNAc...) asparagine) is linked at Asn-59. A disordered region spans residues 69-88 (AEVPKGDRTAGSPPRTISPP). The helical transmembrane segment at 102–126 (YINTVVSCLVFVLGIIGNSTLLRII) threads the bilayer. Residues 127–137 (YKNKCMRNGPN) lie on the Cytoplasmic side of the membrane. Residues 138–163 (ILIASLALGDLLHIVIDIPINVYKLL) traverse the membrane as a helical segment. At 164–175 (AEDWPFGAEMCK) the chain is on the extracellular side. The cysteines at positions 174 and 255 are disulfide-linked. Residues 176 to 197 (LVPFIQKASVGITVLSLCALSI) traverse the membrane as a helical segment. The Cytoplasmic portion of the chain corresponds to 198-218 (DRYRAVASWSRIKGIGVPKWT). Residues 219–243 (AVEIVLIWVVSVVLAVPEAIGFDII) traverse the membrane as a helical segment. Over 244–271 (TMDYKGSYLRICLLHPVQKTAFMQFYKT) the chain is Extracellular. A helical transmembrane segment spans residues 272-296 (AKDWWLFSFYFCLPLAITAFFYTLM). Topologically, residues 297 to 324 (TCEMLRKKSGMQIALNDHLKQRREVAKT) are cytoplasmic. Position 305 is a phosphoserine (Ser-305). Residues 325-350 (VFCLVLVFALCWLPLHLSRILKLTLY) form a helical membrane-spanning segment. Topologically, residues 351–362 (NQNDPNRCELLS) are extracellular. A helical membrane pass occupies residues 363-389 (FLLVLDYIGINMASLNSCINPIALYLV). Topologically, residues 390–442 (SKRFKNCFKSCLCCWCQSFEEKQSLEEKQSCLKFKANDHGYDNFRSSNKYSSS) are cytoplasmic. Residues Cys-402, Cys-403, and Cys-405 are each lipidated (S-palmitoyl cysteine). Phosphoserine is present on Ser-419. Residue Tyr-439 is modified to Phosphotyrosine. Phosphoserine is present on residues Ser-440, Ser-441, and Ser-442.

This sequence belongs to the G-protein coupled receptor 1 family. Endothelin receptor subfamily. EDNRB sub-subfamily. In terms of processing, palmitoylation of Cys-402 was confirmed by the palmitoylation of Cys-402 in a deletion mutant lacking both Cys-403 and Cys-405. Expressed in placental stem villi vessels, but not in cultured placental villi smooth muscle cells.

The protein resides in the cell membrane. Non-specific receptor for endothelin 1, 2, and 3. Mediates its action by association with G proteins that activate a phosphatidylinositol-calcium second messenger system. The sequence is that of Endothelin receptor type B from Homo sapiens (Human).